Consider the following 383-residue polypeptide: MPPPQIKQDLNRSGWESTDFPSVCENCLPDNPYVQMLKEDYGAECKICTRPFTIFRWKADRTARTKRTTICLTCARLKNCCQCCMLDLSFGLPIVVRDAALKMVAPGPESSINREYYAQEHEKEIQEGRGAVEAYEKTDEKARELLRRLANSEPYYRKPRQQLEGPSDDSTEAQPTDAPVVQSRYGNGPGPIRTSESRRGTPLPGRGRGNMRGGRAGRPFPGTAQIPPSPEDYLPPADPNIMSLFVTGVEDDLPEHTLRTFFTQFGQLRSLICSHRAHCAFINFATREGAEAAAQHCKGKAVIQGCPLRVRWGKPKPLDNMDREERMKNAREGRLTVQAQKDGESGQRAITAAGEPATEKPQSFVVAPPPGSGDVQYSSLSGD.

A disordered region spans residues 148 to 228 (RLANSEPYYR…PFPGTAQIPP (81 aa)). The span at 206-216 (RGRGNMRGGRA) shows a compositional bias: gly residues. Positions 242–315 (MSLFVTGVED…CPLRVRWGKP (74 aa)) constitute an RRM domain. Positions 330-383 (AREGRLTVQAQKDGESGQRAITAAGEPATEKPQSFVVAPPPGSGDVQYSSLSGD) are disordered.

It belongs to the SLT11 family. Associated with the spliceosome.

Its subcellular location is the nucleus. In terms of biological role, involved in pre-mRNA splicing. Facilitates the cooperative formation of U2/U6 helix II in association with stem II in the spliceosome. Binds to RNA. The protein is Pre-mRNA-splicing factor slt11 (slt11) of Aspergillus fumigatus (strain ATCC MYA-4609 / CBS 101355 / FGSC A1100 / Af293) (Neosartorya fumigata).